Consider the following 334-residue polypeptide: NAD-dependent protein deacylase sirtuin-6 (334 aa).

Position 2 is an N-acetylserine (S2). S10 is modified (phosphoserine). One can recognise a Deacetylase sirtuin-type domain in the interval 27–272 (PEELERKVWE…CRLMKHLGLE (246 aa)). K33 is modified (N6-acetyllysine). Positions 53, 57, 64, 65, 71, 113, and 133 each coordinate NAD(+). H133 (proton acceptor) is an active-site residue. Residues C141, C144, and C166 each coordinate Zn(2+). Residue K170 forms a Glycyl lysine isopeptide (Lys-Gly) (interchain with G-Cter in ubiquitin) linkage. Residue C177 coordinates Zn(2+). The NAD(+) site is built by G214, S216, N240, Q242, and V258. A disordered region spans residues 312–334 (KSKPNSPILHRPPKRVKTEAAPS).

Belongs to the sirtuin family. Class IV subfamily. In terms of assembly, homodimer; binds to nucleosomes and DNA ends as a homodimer. Interacts with RELA; interferes with RELA binding to target DNA. Interacts with SMARCA5; promoting recruitment of SMARCA5/SNF2H to double-strand breaks (DSBs) sites. Interacts with the mTORC2 complex; preventing the ability of SIRT6 to deacetylate FOXO1. Interacts with the CLOCK-BMAL1 complex; recruited by the CLOCK-BMAL1 complex to regulate expression of clock-controlled genes. Interacts with CSNK2A2; preventing CSNK2A2 localization to the nucleus. Zn(2+) is required as a cofactor. In terms of processing, acetylated at Lys-33. Deacetylation at Lys-33 by SIRT1 promotes homomultimerization and binding to double-strand breaks (DSBs) sites. Post-translationally, phosphorylation at Ser-10 by MAPK8/JNK1 in response to oxidative stress stimulates the mono-ADP-ribosyltransferase activity on PARP1, leading to PARP1 recruitment to double-strand breaks (DSBs). Monoubiquitinated at Lys-170 by STUB1/CHIP, preventing its degradation by the proteasome. In terms of processing, sumoylated, leading to specifically decrease ability to deacetylate histone H3 at 'Lys-56' (H3K56ac). Highest levels are found in muscle, thymus, spleen, brain and heart (at protein level).

It localises to the nucleus. The protein resides in the chromosome. Its subcellular location is the telomere. The protein localises to the endoplasmic reticulum. It catalyses the reaction N(6)-acetyl-L-lysyl-[protein] + NAD(+) + H2O = 2''-O-acetyl-ADP-D-ribose + nicotinamide + L-lysyl-[protein]. The catalysed reaction is N(6)-tetradecanoyl-L-lysyl-[protein] + NAD(+) + H2O = 2''-O-tetradecanoyl-ADP-D-ribose + nicotinamide + L-lysyl-[protein]. The enzyme catalyses N(6)-hexadecanoyl-L-lysyl-[protein] + NAD(+) + H2O = 2''-O-hexadecanoyl-ADP-D-ribose + nicotinamide + L-lysyl-[protein]. It carries out the reaction L-lysyl-[protein] + NAD(+) = N(6)-(ADP-D-ribosyl)-L-lysyl-[protein] + nicotinamide + H(+). It catalyses the reaction L-arginyl-[protein] + NAD(+) = N(omega)-(ADP-D-ribosyl)-L-arginyl-[protein] + nicotinamide + H(+). Compared to the defatty-acylase activity, the protein deacetylase activity is weak in vitro, and requires activation. The histone deacetylase activity is strongly activated upon binding to nucleosomes and chromatin in vivo. Two molecules of SIRT6 associate with the acidic patch of one nucleosome, while the C-terminal disordered region of SIRT6 associates with nucleosomal DNA, leading to efficient histone deacetylation. The protein-lysine deacetylase activity is also activated by long-chain free fatty-acids. In terms of biological role, NAD-dependent protein deacetylase, deacylase and mono-ADP-ribosyltransferase that plays an essential role in DNA damage repair, telomere maintenance, metabolic homeostasis, inflammation, tumorigenesis and aging. Displays protein-lysine deacetylase or defatty-acylase (demyristoylase and depalmitoylase) activity, depending on the context. Acts as a key histone deacetylase by catalyzing deacetylation of histone H3 at 'Lys-9', 'Lys-18' and 'Lys-56' (H3K9ac, H3K18ac and H3K56ac, respectively), suppressing target gene expression of several transcription factors, including NF-kappa-B. Acts as an inhibitor of transcription elongation by mediating deacetylation of H3K9ac and H3K56ac, preventing release of NELFE from chromatin and causing transcriptional pausing. Involved in DNA repair by promoting double-strand break (DSB) repair: acts as a DSB sensor by recognizing and binding DSB sites, leading to (1) recruitment of DNA repair proteins, such as SMARCA5/SNF2H, and (2) deacetylation of histone H3K9ac and H3K56ac. SIRT6 participation to DSB repair is probably involved in extension of life span. Also promotes DNA repair by deacetylating non-histone proteins, such as DDB2 and p53/TP53. Specifically deacetylates H3K18ac at pericentric heterochromatin, thereby maintaining pericentric heterochromatin silencing at centromeres and protecting against genomic instability and cellular senescence. Involved in telomere maintenance by catalyzing deacetylation of histone H3 in telomeric chromatin, regulating telomere position effect and telomere movement in response to DNA damage. Required for embryonic stem cell differentiation by mediating histone deacetylation of H3K9ac. Plays a major role in metabolism by regulating processes such as glycolysis, gluconeogenesis, insulin secretion and lipid metabolism. Inhibits glycolysis via histone deacetylase activity and by acting as a corepressor of the transcription factor HIF1A, thereby controlling the expression of multiple glycolytic genes. Has tumor suppressor activity by repressing glycolysis, thereby inhibiting the Warburg effect. Also regulates glycolysis and tumorigenesis by mediating deacetylation and nuclear export of non-histone proteins, such as isoform M2 of PKM (PKM2). Acts as a negative regulator of gluconeogenesis by mediating deacetylation of non-histone proteins, such as FOXO1 and KAT2A/GCN5. Promotes beta-oxidation of fatty acids during fasting by catalyzing deacetylation of NCOA2, inducing coactivation of PPARA. Acts as a regulator of lipid catabolism in brown adipocytes, both by catalyzing deacetylation of histones and non-histone proteins, such as FOXO1. Also acts as a regulator of circadian rhythms, both by regulating expression of clock-controlled genes involved in lipid and carbohydrate metabolism, and by catalyzing deacetylation of PER2. The defatty-acylase activity is specifically involved in regulation of protein secretion. Has high activity toward long-chain fatty acyl groups and mediates protein-lysine demyristoylation and depalmitoylation of target proteins, such as RRAS2 and TNF, thereby regulating their secretion. Also acts as a mono-ADP-ribosyltransferase by mediating mono-ADP-ribosylation of PARP1, TRIM28/KAP1 or SMARCC2/BAF170. Mono-ADP-ribosyltransferase activity is involved in DNA repair, cellular senescence, repression of LINE-1 retrotransposon elements and regulation of transcription. This Mus musculus (Mouse) protein is NAD-dependent protein deacylase sirtuin-6.